A 128-amino-acid polypeptide reads, in one-letter code: Serum amyloid A-4 protein (128 aa).

The first 18 residues, 1–18 (MKLFIGLIFCSLVMGVSS), serve as a signal peptide directing secretion. The disordered stretch occupies residues 93-128 (SSEREEDQVSNRRAEEWGRSGQDPDHFRPAGLPKKY). A compositionally biased stretch (basic and acidic residues) spans 99 to 120 (DQVSNRRAEEWGRSGQDPDHFR).

The protein belongs to the SAA family. In terms of assembly, apolipoprotein of the HDL complex.

It localises to the secreted. Its function is as follows. Major acute phase reactant. This chain is Serum amyloid A-4 protein, found in Sus scrofa (Pig).